A 577-amino-acid polypeptide reads, in one-letter code: Cleavage stimulation factor subunit 2 (577 aa).

Phosphoserine is present on S14. Positions 16–94 constitute an RRM domain; it reads RSVFVGNIPY…RALRVDNAAS (79 aa). An interactions with CSTF3 and SYMPK region spans residues 108–248; it reads APVIESPYGE…VNGAPPLMQA (141 aa). K189 participates in a covalent cross-link: Glycyl lysine isopeptide (Lys-Gly) (interchain with G-Cter in SUMO2). Residues 207-230 form a disordered region; that stretch reads PVHGAGPGSGSNVSMNQQNPQAPQ. R308 is modified (omega-N-methylarginine). The disordered stretch occupies residues 319–409; it reads RGLLGDAPND…DGRGGRDPRG (91 aa). The segment covering 360–373 has biased composition (basic and acidic residues); the sequence is PGHESRGPPPHELR. The stretch at 410-414 is one 1; approximate repeat; the sequence is IDARG. The interval 410–469 is 12 X 5 AA tandem repeats of M-E-A-R-[AG]; sequence IDARGMEARAMEARGLDARGLEARAMEARAMEARAMEARAMEARAMEVRGMEARGMDTRG. 2 repeat units span residues 415–419 and 420–424. The stretch at 425–429 is one 4; approximate repeat; it reads LDARG. The stretch at 430 to 434 is one 5; approximate repeat; sequence LEARA. 4 tandem repeats follow at residues 435–439, 440–444, 445–449, and 450–454. The stretch at 455-459 is one 10; approximate repeat; that stretch reads MEVRG. Residues 460-464 form repeat 11; that stretch reads MEARG. The 12; approximate repeat unit spans residues 465–469; the sequence is MDTRG. R468 and R475 each carry omega-N-methylarginine. The disordered stretch occupies residues 509–532; sequence LQGASIQGGSQPGGFSPGQNQVTP. The tract at residues 514 to 577 is interaction with RPO2TC1; sequence IQGGSQPGGF…EQIQKSTGAP (64 aa). Phosphoserine is present on residues S518 and S524.

As to quaternary structure, the CSTF complex is composed of CSTF1 (50 kDa subunit), CSTF2 (64 kDa subunit) and CSTF3 (77 kDa subunit). CSTF2 directly interacts with CSTF3, SYMPK and RPO2TC1. Interacts with HSF1 in heat-stressed cells. Interacts with CPSF2, CPSF3 and FIP1L1. Interacts with DDX1.

The protein resides in the nucleus. Functionally, one of the multiple factors required for polyadenylation and 3'-end cleavage of mammalian pre-mRNAs. This subunit is directly involved in the binding to pre-mRNAs. In Pongo abelii (Sumatran orangutan), this protein is Cleavage stimulation factor subunit 2 (CSTF2).